We begin with the raw amino-acid sequence, 222 residues long: MGRCLLIEPGLVPYLTAWEWQRQLMATRIAHRDRPDVLMLLEHPPVYTLGQGADAKHVLVDPASIELYRTERGGEVTYHGPGQLVGYPILDLTGYRQDLHWYLRTLEQVLIEVLADFGVQGEREAGFTGVWAGGRKIAALGIKVSRWVTMHGFALNVDPDLDAFARIVPCGLTRPVGSLVQLCPGVSVEQVQPVVACAFARVFGVQCEPGALEACLAVKPGC.

The BPL/LPL catalytic domain occupies 32 to 207; the sequence is RDRPDVLMLL…AFARVFGVQC (176 aa). Substrate contacts are provided by residues 72 to 79, 139 to 141, and 152 to 154; these read RGGEVTYH, ALG, and GFA. The active-site Acyl-thioester intermediate is the Cys170.

Belongs to the LipB family.

Its subcellular location is the cytoplasm. It catalyses the reaction octanoyl-[ACP] + L-lysyl-[protein] = N(6)-octanoyl-L-lysyl-[protein] + holo-[ACP] + H(+). Its pathway is protein modification; protein lipoylation via endogenous pathway; protein N(6)-(lipoyl)lysine from octanoyl-[acyl-carrier-protein]: step 1/2. Its function is as follows. Catalyzes the transfer of endogenously produced octanoic acid from octanoyl-acyl-carrier-protein onto the lipoyl domains of lipoate-dependent enzymes. Lipoyl-ACP can also act as a substrate although octanoyl-ACP is likely to be the physiological substrate. In Gloeobacter violaceus (strain ATCC 29082 / PCC 7421), this protein is Octanoyltransferase.